We begin with the raw amino-acid sequence, 928 residues long: Isoleucine--tRNA ligase (928 aa).

The 'HIGH' region signature appears at Pro57–His67. Glu552 contributes to the L-isoleucyl-5'-AMP binding site. The 'KMSKS' region motif lies at Lys593–Ser597. Position 596 (Lys596) interacts with ATP. Cys887, Cys890, Cys907, and Cys910 together coordinate Zn(2+).

It belongs to the class-I aminoacyl-tRNA synthetase family. IleS type 1 subfamily. Monomer. It depends on Zn(2+) as a cofactor.

Its subcellular location is the cytoplasm. The enzyme catalyses tRNA(Ile) + L-isoleucine + ATP = L-isoleucyl-tRNA(Ile) + AMP + diphosphate. Catalyzes the attachment of isoleucine to tRNA(Ile). As IleRS can inadvertently accommodate and process structurally similar amino acids such as valine, to avoid such errors it has two additional distinct tRNA(Ile)-dependent editing activities. One activity is designated as 'pretransfer' editing and involves the hydrolysis of activated Val-AMP. The other activity is designated 'posttransfer' editing and involves deacylation of mischarged Val-tRNA(Ile). This Latilactobacillus sakei subsp. sakei (strain 23K) (Lactobacillus sakei subsp. sakei) protein is Isoleucine--tRNA ligase.